A 531-amino-acid polypeptide reads, in one-letter code: SWI/SNF-related matrix-associated actin-dependent regulator of chromatin subfamily D member 2 (531 aa).

Arginine 81 and arginine 104 each carry asymmetric dimethylarginine. Serine 203 is modified (phosphoserine). The interval 205–226 (SKAEGDSAGTAGTPGGTPAGDK) is disordered. Threonine 217 bears the Phosphothreonine mark. Lysine 226 is covalently cross-linked (Glycyl lysine isopeptide (Lys-Gly) (interchain with G-Cter in SUMO2)). Positions 306–383 (HQPPQYKLDP…PMKLAGLLQH (78 aa)) constitute an SWIB/MDM2 domain.

This sequence belongs to the SMARCD family. As to quaternary structure, component of the multiprotein chromatin-remodeling complexes SWI/SNF: SWI/SNF-A (BAF), SWI/SNF-B (PBAF) and related complexes. The canonical complex contains a catalytic subunit (either SMARCA4/BRG1/BAF190A or SMARCA2/BRM/BAF190B), and at least SMARCE1, ACTL6A/BAF53, SMARCC1/BAF155, SMARCC2/BAF170, and SMARCB1/SNF5/BAF47. Other subunits specific to each of the complexes may also be present permitting several possible combinations developmentally and tissue specific. Component of the BAF complex, which includes at least actin (ACTB), ARID1A/BAF250A, ARID1B/BAF250B, SMARCA2/BRM, SMARCA4/BRG1, ACTL6A/BAF53, ACTL6B/BAF53B, SMARCE1/BAF57, SMARCC1/BAF155, SMARCC2/BAF170, SMARCB1/SNF5/INI1, and one or more SMARCD1/BAF60A, SMARCD2/BAF60B, or SMARCD3/BAF60C. In muscle cells, the BAF complex also contains DPF3. Component of the SWI/SNF-B (PBAF) chromatin remodeling complex, at least composed of SMARCA4/BRG1, SMARCB1/BAF47/SNF5, ACTL6A/BAF53A or ACTL6B/BAF53B, SMARCE1/BAF57, SMARCD1/BAF60A, SMARCD2/BAF60B, perhaps SMARCD3/BAF60C, SMARCC1/BAF155, SMARCC2/BAF170, PBRM1/BAF180, ARID2/BAF200 and actin (ACTB). Interacts with UNKL. Interacts with CEBPE. Ubiquitinated through a signaling process involving RAC1 and the RING finger protein UNKL. Isoform 2 is expressed in the pancreas.

It is found in the nucleus. Functionally, involved in transcriptional activation and repression of select genes by chromatin remodeling (alteration of DNA-nucleosome topology). Component of SWI/SNF chromatin remodeling complexes that carry out key enzymatic activities, changing chromatin structure by altering DNA-histone contacts within a nucleosome in an ATP-dependent manner. Critical regulator of myeloid differentiation, controlling granulocytopoiesis and the expression of genes involved in neutrophil granule formation. This is SWI/SNF-related matrix-associated actin-dependent regulator of chromatin subfamily D member 2 (SMARCD2) from Homo sapiens (Human).